A 372-amino-acid polypeptide reads, in one-letter code: MGCNNTALDNCMLPNLSIATAPLDLRFAFSTPLRMLLAIIMILMIAIAFLGNAIVCLIVYQKPAMRSAINLLLATLAFSDIMLSLFCMPFTAVTIITGSWLFGTQFCQISAMLYWFFVLEGVAILLIISVDRFLIIVQRQDKLNPHRAKIMIAASWVLSFCISLPSVVGWTLVEVPTRAPQCVLGYTEFSADRVYAVMLIVAVFFIPFSVMLYSYLCILNTVRRNAVRIHTHADSLCLSQVSKLGLMGLQRPHQMNVDMSFKTRAFTTILILFIGFSLCWLPHSVFSLLSVFSRTFYYSSSFYSISTCTLWLTYLKSVFNPVIYCWRIKKFREACLEFMPKTFKILPNVRGRTRRRIRPSTIYVCGEHQSAV.

Over 1–38 the chain is Extracellular; it reads MGCNNTALDNCMLPNLSIATAPLDLRFAFSTPLRMLLA. 2 N-linked (GlcNAc...) asparagine glycosylation sites follow: Asn-4 and Asn-15. Residues 39–59 form a helical membrane-spanning segment; it reads IIMILMIAIAFLGNAIVCLIV. The Cytoplasmic segment spans residues 60 to 80; it reads YQKPAMRSAINLLLATLAFSD. The helical transmembrane segment at 81 to 101 threads the bilayer; it reads IMLSLFCMPFTAVTIITGSWL. At 102-108 the chain is on the extracellular side; sequence FGTQFCQ. The helical transmembrane segment at 109 to 129 threads the bilayer; sequence ISAMLYWFFVLEGVAILLIIS. Topologically, residues 130 to 149 are cytoplasmic; the sequence is VDRFLIIVQRQDKLNPHRAK. The helical transmembrane segment at 150 to 170 threads the bilayer; it reads IMIAASWVLSFCISLPSVVGW. Topologically, residues 171 to 198 are extracellular; the sequence is TLVEVPTRAPQCVLGYTEFSADRVYAVM. A helical membrane pass occupies residues 199-219; it reads LIVAVFFIPFSVMLYSYLCIL. Topologically, residues 220–268 are cytoplasmic; that stretch reads NTVRRNAVRIHTHADSLCLSQVSKLGLMGLQRPHQMNVDMSFKTRAFTT. Residues 269–289 form a helical membrane-spanning segment; it reads ILILFIGFSLCWLPHSVFSLL. Residues 290–301 are Extracellular-facing; it reads SVFSRTFYYSSS. A helical transmembrane segment spans residues 302 to 324; that stretch reads FYSISTCTLWLTYLKSVFNPVIY. At 325 to 372 the chain is on the cytoplasmic side; sequence CWRIKKFREACLEFMPKTFKILPNVRGRTRRRIRPSTIYVCGEHQSAV.

The protein belongs to the G-protein coupled receptor 1 family. In terms of tissue distribution, ubiquitously expressed.

It localises to the cell membrane. Functionally, highly selective receptor for lysophosphatidic acid (LPA), a mediator of diverse cellular activities. The protein is High-affinity lysophosphatidic acid receptor of Xenopus laevis (African clawed frog).